The chain runs to 145 residues: Large ribosomal subunit protein eL32 (145 aa).

Belongs to the eukaryotic ribosomal protein eL32 family.

The protein is Large ribosomal subunit protein eL32 (rpl32e) of Aeropyrum pernix (strain ATCC 700893 / DSM 11879 / JCM 9820 / NBRC 100138 / K1).